The following is a 329-amino-acid chain: Ornithine carbamoyltransferase (329 aa).

Carbamoyl phosphate contacts are provided by residues 51 to 54 (STRT), Q78, R102, and 129 to 132 (HPVQ). Residues N174, D238, and 242 to 243 (SM) each bind L-ornithine. Carbamoyl phosphate contacts are provided by residues 278-279 (CL) and R306.

This sequence belongs to the aspartate/ornithine carbamoyltransferase superfamily. OTCase family.

The protein localises to the cytoplasm. It catalyses the reaction carbamoyl phosphate + L-ornithine = L-citrulline + phosphate + H(+). The protein operates within amino-acid biosynthesis; L-arginine biosynthesis; L-arginine from L-ornithine and carbamoyl phosphate: step 1/3. Reversibly catalyzes the transfer of the carbamoyl group from carbamoyl phosphate (CP) to the N(epsilon) atom of ornithine (ORN) to produce L-citrulline. This is Ornithine carbamoyltransferase from Helicobacter hepaticus (strain ATCC 51449 / 3B1).